The following is a 241-amino-acid chain: DNA repair protein RecO (241 aa).

This sequence belongs to the RecO family.

Functionally, involved in DNA repair and RecF pathway recombination. The polypeptide is DNA repair protein RecO (Yersinia pseudotuberculosis serotype O:1b (strain IP 31758)).